Reading from the N-terminus, the 397-residue chain is Cystinosin (397 aa).

The signal sequence occupies residues 1–24 (MDFSTHRLTTLLLLLLATVALGNA). The Lumenal portion of the chain corresponds to 25–126 (QSSQLTVDSH…FVRVTVAKSR (102 aa)). N-linked (GlcNAc...) asparagine glycans are attached at residues N43 and N86. The helical transmembrane segment at 127–147 (ALIYTSIIFGWVYFVAWSVSF) threads the bilayer. The 56-residue stretch at 132–187 (SIIFGWVYFVAWSVSFYPQIWSNYRRKSVEGLNFDFLALNIVGFTLYSMFNCGLYF) folds into the PQ-loop 1 domain. The Cytoplasmic portion of the chain corresponds to 148–167 (YPQIWSNYRRKSVEGLNFDF). The chain crosses the membrane as a helical span at residues 168-188 (LALNIVGFTLYSMFNCGLYFI). At 189-210 (EDLQNEYEVRYPLGVNPVMLND) the chain is on the lumenal side. The chain crosses the membrane as a helical span at residues 211–231 (VVFSLHAMFATCITILQCFFY). Residues 232–239 (QRAQQRVS) are Cytoplasmic-facing. A helical membrane pass occupies residues 240–260 (FIAYGILAIFAVVVVVSAGLA). Topologically, residues 261-263 (GGS) are lumenal. The chain crosses the membrane as a helical span at residues 264 to 284 (VIHWLDFLYYCSYVKLTITII). The PQ-loop 2 domain maps to 271–327 (LYYCSYVKLTITIIKYVPQALMNYRRKSTSGWSIGNILLDFTGGTLSMLQMILNAHN). The Cytoplasmic segment spans residues 285–302 (KYVPQALMNYRRKSTSGW). Residues 303 to 323 (SIGNILLDFTGGTLSMLQMIL) traverse the membrane as a helical segment. Residues 324 to 340 (NAHNYDDWVSIFGDPTK) are Lumenal-facing. The helical transmembrane segment at 341-361 (FGLGLFSVLFDVFFMLQHYVF) threads the bilayer. Residues 362-397 (YRHSRESSSSDLTTVTDVQNRTNESPPPSEVTTEKY) lie on the Cytoplasmic side of the membrane. Polar residues predominate over residues 373–385 (LTTVTDVQNRTNE). Positions 373-397 (LTTVTDVQNRTNESPPPSEVTTEKY) are disordered.

This sequence belongs to the cystinosin family.

The protein localises to the lysosome membrane. It carries out the reaction L-cystine(out) + H(+)(out) = L-cystine(in) + H(+)(in). Cystine/H(+) symporter that mediates export of cystine, the oxidized dimer of cysteine, from lysosomes. Involved in cysteine homeostasis during periods of fasting, which indirectly regulates mTORC1-mediated signaling by supporting de novo CoA synthesis, the TCA cycle and amino acid metabolism during periods of food shortage. Important for maintaining autophagy, and for development and survival during periods of fasting. In Drosophila melanogaster (Fruit fly), this protein is Cystinosin.